Reading from the N-terminus, the 526-residue chain is Putative D-lactate dehydrogenase C713.03, mitochondrial (526 aa).

Positions 93-272 (YRGKTQLALK…TKLSVICPKR (180 aa)) constitute an FAD-binding PCMH-type domain.

It belongs to the FAD-binding oxidoreductase/transferase type 4 family. Requires FAD as cofactor.

It localises to the mitochondrion matrix. The enzyme catalyses (R)-lactate + 2 Fe(III)-[cytochrome c] = 2 Fe(II)-[cytochrome c] + pyruvate + 2 H(+). This Schizosaccharomyces pombe (strain 972 / ATCC 24843) (Fission yeast) protein is Putative D-lactate dehydrogenase C713.03, mitochondrial.